Reading from the N-terminus, the 547-residue chain is Ribosome protection protein VmlR (547 aa).

The ABC transporter 1 domain maps to 5–200 (VTLTNVSYEV…FREKKRLTQQ (196 aa)). Position 37 to 44 (37 to 44 (GKNGAGKS)) interacts with ATP. An antibiotic resistance domain (ARD) region spans residues 183-289 (GNYSGYMKFR…SIDTTHKTGK (107 aa)). Coiled-coil stretches lie at residues 193-222 (EKKRLTQQREYEKQQKMVERIEAQMNGLAS) and 245-269 (AKRTDAQIKSKQKRLEKELEKAKAE). The 213-residue stretch at 292–504 (LEVQNVTKAF…REELRLKLET (213 aa)) folds into the ABC transporter 2 domain. 324–331 (GPNGSGKT) serves as a coordination point for ATP. The interval 483–547 (KQLNDVPSER…KELDHQDKKD (65 aa)) is C-terminal extension (CTE). Positions 488–543 (VPSERNEREELRLKLETERQEVLGKLSFMTPNDKGYKELDQAFNELTKRIKELDHQ) form a coiled coil.

The protein belongs to the ABC transporter superfamily. ABCF family. ARE2 subfamily. Binds within the E-site of the 70S ribosome, where it contacts ribosomal proteins L1, L5, L33-1, S7, S11, the 16 and 23S rRNAs and the acceptor arm of the P-site tRNA.

The protein localises to the cytoplasm. In terms of biological role, recognizes and binds in the vacant E-site of ribosomes stalled by some peptidyltransferase center (PTC)-targeting antibiotics. Makes contact with the PTC and both ribosomal subunits. Induces conformational changes in the P-site, which allows it to dislodge the antibiotic from its PTC binding site. Binds to ribosomes either directly following translation initation or subsequent to E tRNA release during elongation. Involved in resistance to a narrow spectrum of antibiotics (the streptogramin A antibiotic virginiamycin M, the lincosamide antibiotic lincomycin and the pleuromutilin antibiotic tiamulin). This Bacillus subtilis (strain 168) protein is Ribosome protection protein VmlR.